The chain runs to 582 residues: SHC-transforming protein 2 (582 aa).

2 disordered regions span residues 1-24 and 47-70; these read MTQGPGGRAPPAPPAPPEPEAPTT and GPAAARAAGASGGADPQPEPAGPG. Residues 8 to 20 show a composition bias toward pro residues; that stretch reads RAPPAPPAPPEPE. In terms of domain architecture, PID spans 147 to 329; the sequence is LGPGVSYVVR…AGPEESAWGD (183 aa). The interval 330-486 is CH1; it reads EEDSLEHNYY…PTEEQLRQEP (157 aa). Phosphotyrosine occurs at positions 338, 339, and 414. The interval 460–481 is disordered; the sequence is PLEDQWPSPPTRRAPVAPTEEQ. The SH2 domain maps to 487 to 578; the sequence is WYHGRMSRRA…ESELHLRGVV (92 aa).

Interacts with the Trk receptors in a phosphotyrosine-dependent manner and MEGF12. Once activated, binds to GRB2. In terms of processing, phosphorylated on tyrosines by the Trk receptors. In terms of tissue distribution, expressed in brain. Expressed at high level in the hypothalamus and at low level in the caudate nucleus.

Signaling adapter that couples activated growth factor receptors to signaling pathway in neurons. Involved in the signal transduction pathways of neurotrophin-activated Trk receptors in cortical neurons. The polypeptide is SHC-transforming protein 2 (SHC2) (Homo sapiens (Human)).